The chain runs to 73 residues: Cx9C motif-containing protein 4, mitochondrial (73 aa).

The region spanning S2–N44 is the CHCH domain. 2 consecutive short sequence motifs (cx9C motif) follow at residues C5–C15 and C26–C36. Disulfide bonds link C5/C36 and C15/C26.

Belongs to the CMC4 family.

It is found in the mitochondrion intermembrane space. The polypeptide is Cx9C motif-containing protein 4, mitochondrial (CMC4) (Saccharomyces cerevisiae (strain ATCC 204508 / S288c) (Baker's yeast)).